The chain runs to 328 residues: Phosphate acyltransferase (328 aa).

Belongs to the PlsX family. As to quaternary structure, homodimer. Probably interacts with PlsY.

The protein localises to the cytoplasm. The enzyme catalyses a fatty acyl-[ACP] + phosphate = an acyl phosphate + holo-[ACP]. It functions in the pathway lipid metabolism; phospholipid metabolism. Catalyzes the reversible formation of acyl-phosphate (acyl-PO(4)) from acyl-[acyl-carrier-protein] (acyl-ACP). This enzyme utilizes acyl-ACP as fatty acyl donor, but not acyl-CoA. This chain is Phosphate acyltransferase, found in Campylobacter jejuni subsp. jejuni serotype O:6 (strain 81116 / NCTC 11828).